A 116-amino-acid polypeptide reads, in one-letter code: MFSWIKGKEGEDKAVEYLRNSGYRILERNFRSRFGEIDIIAEDNGTIVIVEVRSKGSTGYGYPEESIDHKKVRKIIKTAQFYLLKRDIKGKQVRFDIISIVNNNIFHIKNAFDLDY.

The protein belongs to the UPF0102 family.

The polypeptide is UPF0102 protein PERMA_0362 (Persephonella marina (strain DSM 14350 / EX-H1)).